The primary structure comprises 373 residues: Histidinol-phosphate aminotransferase (373 aa).

N6-(pyridoxal phosphate)lysine is present on lysine 233.

This sequence belongs to the class-II pyridoxal-phosphate-dependent aminotransferase family. Histidinol-phosphate aminotransferase subfamily. In terms of assembly, homodimer. It depends on pyridoxal 5'-phosphate as a cofactor.

The catalysed reaction is L-histidinol phosphate + 2-oxoglutarate = 3-(imidazol-4-yl)-2-oxopropyl phosphate + L-glutamate. It functions in the pathway amino-acid biosynthesis; L-histidine biosynthesis; L-histidine from 5-phospho-alpha-D-ribose 1-diphosphate: step 7/9. The protein is Histidinol-phosphate aminotransferase of Nitratidesulfovibrio vulgaris (strain ATCC 29579 / DSM 644 / CCUG 34227 / NCIMB 8303 / VKM B-1760 / Hildenborough) (Desulfovibrio vulgaris).